A 164-amino-acid polypeptide reads, in one-letter code: Large ribosomal subunit protein uL23 (164 aa).

The segment at 1-41 (MPAKAASAAASKKNSAPKSAVSKKVAKKGAPAAAAKPTKVV) is disordered.

The protein belongs to the universal ribosomal protein uL23 family.

This protein binds to a specific region on the 26S rRNA. This chain is Large ribosomal subunit protein uL23 (RPL23A), found in Trypanosoma brucei brucei.